The following is a 193-amino-acid chain: Holliday junction branch migration complex subunit RuvA (193 aa).

The interval 1 to 64 is domain I; the sequence is MIGRIAGTLI…EDAHLLYGFG (64 aa). The tract at residues 65-143 is domain II; sequence TAAERETFRQ…ADLGTVPGGP (79 aa). Residues 144–151 form a flexible linker region; the sequence is AVSDDAVD. A domain III region spans residues 151-193; that stretch reads DVLNALLALGYSDKEAALAIKQVPAGTGVSEGIKLALKALSKG.

The protein belongs to the RuvA family. In terms of assembly, homotetramer. Forms an RuvA(8)-RuvB(12)-Holliday junction (HJ) complex. HJ DNA is sandwiched between 2 RuvA tetramers; dsDNA enters through RuvA and exits via RuvB. An RuvB hexamer assembles on each DNA strand where it exits the tetramer. Each RuvB hexamer is contacted by two RuvA subunits (via domain III) on 2 adjacent RuvB subunits; this complex drives branch migration. In the full resolvosome a probable DNA-RuvA(4)-RuvB(12)-RuvC(2) complex forms which resolves the HJ.

It localises to the cytoplasm. In terms of biological role, the RuvA-RuvB-RuvC complex processes Holliday junction (HJ) DNA during genetic recombination and DNA repair, while the RuvA-RuvB complex plays an important role in the rescue of blocked DNA replication forks via replication fork reversal (RFR). RuvA specifically binds to HJ cruciform DNA, conferring on it an open structure. The RuvB hexamer acts as an ATP-dependent pump, pulling dsDNA into and through the RuvAB complex. HJ branch migration allows RuvC to scan DNA until it finds its consensus sequence, where it cleaves and resolves the cruciform DNA. In Ralstonia pickettii (strain 12J), this protein is Holliday junction branch migration complex subunit RuvA.